We begin with the raw amino-acid sequence, 486 residues long: Glutamyl-tRNA(Gln) amidotransferase subunit A (486 aa).

Catalysis depends on charge relay system residues Lys-75 and Ser-150. Ser-174 serves as the catalytic Acyl-ester intermediate.

Belongs to the amidase family. GatA subfamily. As to quaternary structure, heterotrimer of A, B and C subunits.

The catalysed reaction is L-glutamyl-tRNA(Gln) + L-glutamine + ATP + H2O = L-glutaminyl-tRNA(Gln) + L-glutamate + ADP + phosphate + H(+). Allows the formation of correctly charged Gln-tRNA(Gln) through the transamidation of misacylated Glu-tRNA(Gln) in organisms which lack glutaminyl-tRNA synthetase. The reaction takes place in the presence of glutamine and ATP through an activated gamma-phospho-Glu-tRNA(Gln). The polypeptide is Glutamyl-tRNA(Gln) amidotransferase subunit A (Nostoc punctiforme (strain ATCC 29133 / PCC 73102)).